Here is a 185-residue protein sequence, read N- to C-terminus: Ribosome-recycling factor (185 aa).

The protein belongs to the RRF family.

The protein localises to the cytoplasm. In terms of biological role, responsible for the release of ribosomes from messenger RNA at the termination of protein biosynthesis. May increase the efficiency of translation by recycling ribosomes from one round of translation to another. This chain is Ribosome-recycling factor, found in Shewanella piezotolerans (strain WP3 / JCM 13877).